Here is a 177-residue protein sequence, read N- to C-terminus: Adenine phosphoribosyltransferase (177 aa).

This sequence belongs to the purine/pyrimidine phosphoribosyltransferase family. In terms of assembly, homodimer.

It localises to the cytoplasm. It catalyses the reaction AMP + diphosphate = 5-phospho-alpha-D-ribose 1-diphosphate + adenine. The protein operates within purine metabolism; AMP biosynthesis via salvage pathway; AMP from adenine: step 1/1. In terms of biological role, catalyzes a salvage reaction resulting in the formation of AMP, that is energically less costly than de novo synthesis. This Acidothermus cellulolyticus (strain ATCC 43068 / DSM 8971 / 11B) protein is Adenine phosphoribosyltransferase.